Here is a 302-residue protein sequence, read N- to C-terminus: 4-diphosphocytidyl-2-C-methyl-D-erythritol kinase (302 aa).

Lysine 13 is a catalytic residue. 101 to 111 contributes to the ATP binding site; sequence PVASGIGGGSS. Residue aspartate 143 is part of the active site.

The protein belongs to the GHMP kinase family. IspE subfamily.

The catalysed reaction is 4-CDP-2-C-methyl-D-erythritol + ATP = 4-CDP-2-C-methyl-D-erythritol 2-phosphate + ADP + H(+). Its pathway is isoprenoid biosynthesis; isopentenyl diphosphate biosynthesis via DXP pathway; isopentenyl diphosphate from 1-deoxy-D-xylulose 5-phosphate: step 3/6. In terms of biological role, catalyzes the phosphorylation of the position 2 hydroxy group of 4-diphosphocytidyl-2C-methyl-D-erythritol. The protein is 4-diphosphocytidyl-2-C-methyl-D-erythritol kinase of Granulibacter bethesdensis (strain ATCC BAA-1260 / CGDNIH1).